The primary structure comprises 159 residues: MEKIASFTIDHTKLKRGVYVSRQDKVAGNVITTFDLRLKEPNNEPALDGAASHTIEHIGATFLRNHKTWADRTIYFGPMGCQTGFYLILAGDWKAKDIVPLMQEMFAYVAQFTGTIPGESAVECGNFRFMDLIQAKEEAGKYFTEVLDNIAEKNLSYPS.

Histidine 53, histidine 57, and cysteine 124 together coordinate Fe cation.

This sequence belongs to the LuxS family. As to quaternary structure, homodimer. Fe cation serves as cofactor.

It carries out the reaction S-(5-deoxy-D-ribos-5-yl)-L-homocysteine = (S)-4,5-dihydroxypentane-2,3-dione + L-homocysteine. Its function is as follows. Involved in the synthesis of autoinducer 2 (AI-2) which is secreted by bacteria and is used to communicate both the cell density and the metabolic potential of the environment. The regulation of gene expression in response to changes in cell density is called quorum sensing. Catalyzes the transformation of S-ribosylhomocysteine (RHC) to homocysteine (HC) and 4,5-dihydroxy-2,3-pentadione (DPD). This chain is S-ribosylhomocysteine lyase, found in Desulfotalea psychrophila (strain LSv54 / DSM 12343).